The primary structure comprises 633 residues: UvrABC system protein C (633 aa).

The GIY-YIG domain occupies 21 to 100 (TDPGVYKFLD…IKELQPRYNV (80 aa)). Residues 214 to 249 (QELMDLLKDEMQRQSDAHNFEEAARLRDQVKALKDY) form the UVR domain.

This sequence belongs to the UvrC family. As to quaternary structure, interacts with UvrB in an incision complex.

The protein resides in the cytoplasm. Its function is as follows. The UvrABC repair system catalyzes the recognition and processing of DNA lesions. UvrC both incises the 5' and 3' sides of the lesion. The N-terminal half is responsible for the 3' incision and the C-terminal half is responsible for the 5' incision. This is UvrABC system protein C from Salinibacter ruber (strain DSM 13855 / M31).